We begin with the raw amino-acid sequence, 65 residues long: Large ribosomal subunit protein bL35 (65 aa).

Residues 28–53 (NGSHNLEKKNRKRTRRLHQSTMLDNA) form a disordered region. The span at 36-45 (KNRKRTRRLH) shows a compositional bias: basic residues.

Belongs to the bacterial ribosomal protein bL35 family.

The polypeptide is Large ribosomal subunit protein bL35 (Chlorobium luteolum (strain DSM 273 / BCRC 81028 / 2530) (Pelodictyon luteolum)).